The following is a 180-amino-acid chain: Transcription factor IBH1-like 1 (180 aa).

Residues 110–160 form the bHLH domain; that stretch reads KSKSASEEAAAKAKRLVKRRTQGLRNVVPGGELMSNDVLLLQETLDYIVSL.

It belongs to the bHLH protein family.

It is found in the nucleus. Its function is as follows. Functions redundandly with IBH1/BHLH158 in a regulation node known as the incoherent feed-forward loop (FFL). Acts as transcriptional repressor that negatively regulates cell and organ elongation in response to gibberellin (GA) and brassinosteroid (BR) signaling. This chain is Transcription factor IBH1-like 1, found in Arabidopsis thaliana (Mouse-ear cress).